Here is a 94-residue protein sequence, read N- to C-terminus: Integration host factor subunit beta (94 aa).

This sequence belongs to the bacterial histone-like protein family. As to quaternary structure, heterodimer of an alpha and a beta chain.

Its function is as follows. This protein is one of the two subunits of integration host factor, a specific DNA-binding protein that functions in genetic recombination as well as in transcriptional and translational control. The protein is Integration host factor subunit beta of Yersinia enterocolitica serotype O:8 / biotype 1B (strain NCTC 13174 / 8081).